We begin with the raw amino-acid sequence, 58 residues long: MKNTILILFTAFIALLGFFGMSAEALADPKADPLAGPNPDADPEAINLKAIAALARNY.

Positions Met1 to Ala27 are cleaved as a signal peptide. AXPX repeat units follow at residues Ala27–Lys30, Ala31–Leu34, Ala35–Asn38, and Ala41–Glu44. A propeptide spanning residues Asp28–Ala45 is cleaved from the precursor.

It belongs to the MCD family. Mastoparan subfamily. In terms of tissue distribution, expressed by the venom gland.

It is found in the secreted. The synthetic peptide shows antimicrobial activities against Gram-negative bacteria (but not against all strains tested), Gram-positive bacteria (all strains tested) and the fungi C.albicans (but not C.parapsilosis). Exhibits little hemolytic activity against washed human erythrocytes. The chain is Mastoparan-VT7 from Vespa tropica (Greater banded hornet).